The following is an 849-amino-acid chain: SMY2 homolog 2 (849 aa).

Residues 149 to 205 enclose the GYF domain; it reads ESQWKYIDSNGNIQGPFGTNNMSQWYQGGYFTPTLQICRLATSPEPFGVNDRFIRLG. Disordered stretches follow at residues 305–505, 527–547, 593–612, and 634–661; these read APLS…TTNL, DLKKENSSKKEKKPNRTQLDR, TKINSQSKINKANNGDIKPD, and NRASSLDDFISRTPSPSSSALNSSNTSN. Residues 308-318 are compositionally biased toward low complexity; that stretch reads STTSSRSNKTT. Residues 319–331 are compositionally biased toward basic and acidic residues; sequence SSHEEKVPSHEEA. A Phosphothreonine modification is found at T350. Composition is skewed to basic and acidic residues over residues 361-375, 387-403, and 425-443; these read TKQEEESRGSEKEQN, VDRKDVISTADEPKSKD, and LLEEQQRQEEEKKRREEQR. Residues 410-484 are a coiled coil; that stretch reads EEQKRFAKAE…EKQKELLNNI (75 aa). Over residues 444 to 455 the composition is skewed to basic residues; it reads KLKKEKKLKQKQ. Basic and acidic residues predominate over residues 456 to 479; sequence KKEEEKLKKKKKEEGKLEKEKQKE. The span at 483-505 shows a compositional bias: polar residues; sequence NILTGDTETPSSENTATSITTNL. Over residues 594 to 605 the composition is skewed to polar residues; it reads KINSQSKINKAN. The span at 644-661 shows a compositional bias: low complexity; it reads SRTPSPSSSALNSSNTSN.

It belongs to the SMY2/mpd2 family. Interacts with ribosomes. Interacts with EAP1 and MSL5 (via the GYP domain).

The protein localises to the cytoplasm. This chain is SMY2 homolog 2 (SYH1), found in Saccharomyces cerevisiae (strain ATCC 204508 / S288c) (Baker's yeast).